We begin with the raw amino-acid sequence, 413 residues long: DNA primase DnaG (413 aa).

The Toprim domain maps to Pro-168 to Val-246. Positions 174, 219, and 221 each coordinate Mg(2+).

Belongs to the archaeal DnaG primase family. In terms of assembly, forms a ternary complex with MCM helicase and DNA. Component of the archaeal exosome complex. Mg(2+) serves as cofactor.

It catalyses the reaction ssDNA + n NTP = ssDNA/pppN(pN)n-1 hybrid + (n-1) diphosphate.. Its function is as follows. RNA polymerase that catalyzes the synthesis of short RNA molecules used as primers for DNA polymerase during DNA replication. Also part of the exosome, which is a complex involved in RNA degradation. Acts as a poly(A)-binding protein that enhances the interaction between heteromeric, adenine-rich transcripts and the exosome. The polypeptide is DNA primase DnaG (Metallosphaera sedula (strain ATCC 51363 / DSM 5348 / JCM 9185 / NBRC 15509 / TH2)).